Consider the following 140-residue polypeptide: MIDIKDIQEALPHRYPMLLVDRVLEVSDDHIVALKNVTINEPFFNGHFPHYPVMPGVLIMEALAQTAGVLELSKEENKGKLVFYAGMDKVKFKKQVIPGDQLIMTATFIKRRGTIAVVEAKAEVDGKLAASGTLTFAIGS.

H47 is an active-site residue.

This sequence belongs to the thioester dehydratase family. FabZ subfamily.

The protein resides in the cytoplasm. The enzyme catalyses a (3R)-hydroxyacyl-[ACP] = a (2E)-enoyl-[ACP] + H2O. Functionally, involved in unsaturated fatty acids biosynthesis. Catalyzes the dehydration of short chain beta-hydroxyacyl-ACPs and long chain saturated and unsaturated beta-hydroxyacyl-ACPs. The polypeptide is 3-hydroxyacyl-[acyl-carrier-protein] dehydratase FabZ (Streptococcus uberis (strain ATCC BAA-854 / 0140J)).